Here is a 213-residue protein sequence, read N- to C-terminus: Phosphoheptose isomerase (213 aa).

Residues 50–208 (MAETFEGGGR…IDLVERMLGY (159 aa)) form the SIS domain. 65 to 67 (NGG) is a substrate binding site. Zn(2+)-binding residues include histidine 74 and glutamate 78. Residues glutamate 78, 109-110 (ND), 135-137 (STS), serine 140, and glutamine 188 contribute to the substrate site. Positions 188 and 196 each coordinate Zn(2+).

Belongs to the SIS family. GmhA subfamily. Requires Zn(2+) as cofactor.

The protein localises to the cytoplasm. It carries out the reaction 2 D-sedoheptulose 7-phosphate = D-glycero-alpha-D-manno-heptose 7-phosphate + D-glycero-beta-D-manno-heptose 7-phosphate. It functions in the pathway carbohydrate biosynthesis; D-glycero-D-manno-heptose 7-phosphate biosynthesis; D-glycero-alpha-D-manno-heptose 7-phosphate and D-glycero-beta-D-manno-heptose 7-phosphate from sedoheptulose 7-phosphate: step 1/1. Functionally, catalyzes the isomerization of sedoheptulose 7-phosphate in D-glycero-D-manno-heptose 7-phosphate. The polypeptide is Phosphoheptose isomerase (Chlorobium phaeovibrioides (strain DSM 265 / 1930) (Prosthecochloris vibrioformis (strain DSM 265))).